The chain runs to 163 residues: ATP synthase subunit b (163 aa).

The chain crosses the membrane as a helical span at residues 10-29 (VFMQMFHFLLMLVVLRLFAY).

The protein belongs to the ATPase B chain family. F-type ATPases have 2 components, F(1) - the catalytic core - and F(0) - the membrane proton channel. F(1) has five subunits: alpha(3), beta(3), gamma(1), delta(1), epsilon(1). F(0) has three main subunits: a(1), b(2) and c(10-14). The alpha and beta chains form an alternating ring which encloses part of the gamma chain. F(1) is attached to F(0) by a central stalk formed by the gamma and epsilon chains, while a peripheral stalk is formed by the delta and b chains.

It localises to the cell membrane. Its function is as follows. F(1)F(0) ATP synthase produces ATP from ADP in the presence of a proton or sodium gradient. F-type ATPases consist of two structural domains, F(1) containing the extramembraneous catalytic core and F(0) containing the membrane proton channel, linked together by a central stalk and a peripheral stalk. During catalysis, ATP synthesis in the catalytic domain of F(1) is coupled via a rotary mechanism of the central stalk subunits to proton translocation. Component of the F(0) channel, it forms part of the peripheral stalk, linking F(1) to F(0). In Desulforudis audaxviator (strain MP104C), this protein is ATP synthase subunit b.